The primary structure comprises 302 residues: Pyridoxal 5'-phosphate synthase subunit PdxS (302 aa).

D32 is a D-ribose 5-phosphate binding site. K89 (schiff-base intermediate with D-ribose 5-phosphate) is an active-site residue. G161 contacts D-ribose 5-phosphate. R173 lines the D-glyceraldehyde 3-phosphate pocket. Residues G222 and 243–244 (GS) each bind D-ribose 5-phosphate. The disordered stretch occupies residues 275 to 302 (IAKNPGKGMKGQANADLDEEEQLQGRGV).

It belongs to the PdxS/SNZ family. In the presence of PdxT, forms a dodecamer of heterodimers.

It catalyses the reaction aldehydo-D-ribose 5-phosphate + D-glyceraldehyde 3-phosphate + L-glutamine = pyridoxal 5'-phosphate + L-glutamate + phosphate + 3 H2O + H(+). Its pathway is cofactor biosynthesis; pyridoxal 5'-phosphate biosynthesis. Its function is as follows. Catalyzes the formation of pyridoxal 5'-phosphate from ribose 5-phosphate (RBP), glyceraldehyde 3-phosphate (G3P) and ammonia. The ammonia is provided by the PdxT subunit. Can also use ribulose 5-phosphate and dihydroxyacetone phosphate as substrates, resulting from enzyme-catalyzed isomerization of RBP and G3P, respectively. The polypeptide is Pyridoxal 5'-phosphate synthase subunit PdxS (Haloarcula marismortui (strain ATCC 43049 / DSM 3752 / JCM 8966 / VKM B-1809) (Halobacterium marismortui)).